We begin with the raw amino-acid sequence, 353 residues long: Adenine deaminase (353 aa).

Residues histidine 19, histidine 21, and histidine 208 each contribute to the Zn(2+) site. Catalysis depends on glutamate 211, which acts as the Proton donor. Aspartate 289 is a Zn(2+) binding site. Aspartate 290 provides a ligand contact to substrate.

The protein belongs to the metallo-dependent hydrolases superfamily. Adenosine and AMP deaminases family. Adenine deaminase type 2 subfamily. Requires Zn(2+) as cofactor.

Its subcellular location is the cytoplasm. The protein localises to the nucleus. It carries out the reaction adenine + H2O + H(+) = hypoxanthine + NH4(+). Functionally, catalyzes the hydrolytic deamination of adenine to hypoxanthine. Plays an important role in the purine salvage pathway and in nitrogen catabolism. The polypeptide is Adenine deaminase (Gibberella zeae (strain ATCC MYA-4620 / CBS 123657 / FGSC 9075 / NRRL 31084 / PH-1) (Wheat head blight fungus)).